Reading from the N-terminus, the 590-residue chain is Guanylate-binding protein 5 (590 aa).

An NLRP3-binding region spans residues 1 to 306 (MAPEIHMPEP…LTYVDAINSG (306 aa)). The tract at residues 1-310 (MAPEIHMPEP…DAINSGALPS (310 aa)) is GTPase domain (Globular). Positions 35-277 (TQPVVVVAIV…FCSHIFTQSK (243 aa)) constitute a GB1/RHD3-type G domain. GTP is bound by residues 45–52 (GLYRTGKS), 67–69 (VGS), 182–183 (RD), and L246. Positions 529 to 590 (QIALEKARVA…RRHHHDCVIS (62 aa)) are required for tetramerization, but not for dimerization. At C587 the chain carries Cysteine methyl ester. Residue C587 is the site of S-geranylgeranyl cysteine attachment. A propeptide spans 588–590 (VIS) (removed in mature form).

This sequence belongs to the TRAFAC class dynamin-like GTPase superfamily. GB1/RHD3 GTPase family. GB1 subfamily. Homodimer; homodimerizes upon GTP-binding, forming a close face-to-face dimer. Heterodimer with other family members, including GBP1, GBP2, GBP3 and GBP4. May also form tetramers (dimer of dimers) in the presence of GTP. Interacts with NLRP3, possibly in its tetrameric form, and promotes PYCARD/ASC polymerization. In terms of processing, isoprenylation is required for proper subcellular location. In terms of tissue distribution, low expression, if any, in many tissues in the absence of stimulation.

Its subcellular location is the cytoplasmic vesicle membrane. It localises to the golgi apparatus membrane. The protein resides in the cytoplasm. It carries out the reaction GTP + H2O = GDP + phosphate + H(+). In terms of biological role, interferon (IFN)-inducible GTPase that plays important roles in innate immunity against a diverse range of bacterial, viral and protozoan pathogens. Hydrolyzes GTP, but in contrast to other family members, does not produce GMP. Following infection, recruited to the pathogen-containing vacuoles or vacuole-escaped bacteria and acts as a positive regulator of inflammasome assembly by promoting the release of inflammasome ligands from bacteria. Acts by promoting lysis of pathogen-containing vacuoles, releasing pathogens into the cytosol. Following pathogen release in the cytosol, promotes recruitment of proteins that mediate bacterial cytolysis, such as Gm12250/Irgb10: this liberates ligands that are detected by inflammasomes, such as lipopolysaccharide (LPS) that activates the non-canonical CASP4/CASP11 inflammasome or double-stranded DNA (dsDNA) that activates the AIM2 inflammasome. As an activator of NLRP3 inflammasome assembly: promotes selective NLRP3 inflammasome assembly in response to microbial and soluble, but not crystalline, agents. Independently of its GTPase activity, acts as an inhibitor of various viruses infectivity by inhibiting FURIN-mediated maturation of viral envelope proteins. In Mus musculus (Mouse), this protein is Guanylate-binding protein 5.